The chain runs to 433 residues: ATP-dependent protease ATPase subunit HslU (433 aa).

Residues isoleucine 18, 60 to 65 (GVGKTE), aspartate 246, glutamate 311, and arginine 383 contribute to the ATP site.

This sequence belongs to the ClpX chaperone family. HslU subfamily. In terms of assembly, a double ring-shaped homohexamer of HslV is capped on each side by a ring-shaped HslU homohexamer. The assembly of the HslU/HslV complex is dependent on binding of ATP.

It localises to the cytoplasm. Its function is as follows. ATPase subunit of a proteasome-like degradation complex; this subunit has chaperone activity. The binding of ATP and its subsequent hydrolysis by HslU are essential for unfolding of protein substrates subsequently hydrolyzed by HslV. HslU recognizes the N-terminal part of its protein substrates and unfolds these before they are guided to HslV for hydrolysis. This chain is ATP-dependent protease ATPase subunit HslU, found in Cereibacter sphaeroides (strain ATCC 17025 / ATH 2.4.3) (Rhodobacter sphaeroides).